The sequence spans 275 residues: Shikimate dehydrogenase (NADP(+)) (275 aa).

Residues 19–21 (SIS) and Thr-66 contribute to the shikimate site. Lys-70 serves as the catalytic Proton acceptor. Residues Asn-91 and Asp-106 each contribute to the shikimate site. NADP(+) contacts are provided by residues 129 to 133 (GAGGA), 153 to 158 (NRTYGR), and Ile-219. Tyr-221 is a binding site for shikimate. An NADP(+)-binding site is contributed by Gly-242.

This sequence belongs to the shikimate dehydrogenase family. Homodimer.

The enzyme catalyses shikimate + NADP(+) = 3-dehydroshikimate + NADPH + H(+). The protein operates within metabolic intermediate biosynthesis; chorismate biosynthesis; chorismate from D-erythrose 4-phosphate and phosphoenolpyruvate: step 4/7. Involved in the biosynthesis of the chorismate, which leads to the biosynthesis of aromatic amino acids. Catalyzes the reversible NADPH linked reduction of 3-dehydroshikimate (DHSA) to yield shikimate (SA). The sequence is that of Shikimate dehydrogenase (NADP(+)) from Dictyoglomus thermophilum (strain ATCC 35947 / DSM 3960 / H-6-12).